We begin with the raw amino-acid sequence, 334 residues long: Formamidase (334 aa).

In terms of domain architecture, CN hydrolase spans Phe-14–Pro-260. The Proton acceptor role is filled by Glu-60. Catalysis depends on Lys-133, which acts as the Proton donor. The active-site Nucleophile is Cys-166.

Belongs to the carbon-nitrogen hydrolase superfamily. Aliphatic amidase family.

The enzyme catalyses formamide + H2O = formate + NH4(+). In terms of biological role, is an aliphatic amidase with a restricted substrate specificity, as it only hydrolyzes formamide. The sequence is that of Formamidase from Helicobacter pylori (strain Shi470).